Here is a 141-residue protein sequence, read N- to C-terminus: Galactose-6-phosphate isomerase subunit LacA 1 (141 aa).

This sequence belongs to the LacAB/RpiB family. As to quaternary structure, heteromultimeric protein consisting of LacA and LacB.

The catalysed reaction is aldehydo-D-galactose 6-phosphate = keto-D-tagatose 6-phosphate. It participates in carbohydrate metabolism; D-galactose 6-phosphate degradation; D-tagatose 6-phosphate from D-galactose 6-phosphate: step 1/1. The polypeptide is Galactose-6-phosphate isomerase subunit LacA 1 (Streptococcus pyogenes serotype M1).